Here is a 72-residue protein sequence, read N- to C-terminus: Translation initiation factor IF-1 (72 aa).

Residues 1–72 (MAKEDNIEMQ…SKGRIVFRSR (72 aa)) form the S1-like domain.

Belongs to the IF-1 family. In terms of assembly, component of the 30S ribosomal translation pre-initiation complex which assembles on the 30S ribosome in the order IF-2 and IF-3, IF-1 and N-formylmethionyl-tRNA(fMet); mRNA recruitment can occur at any time during PIC assembly.

Its subcellular location is the cytoplasm. Functionally, one of the essential components for the initiation of protein synthesis. Stabilizes the binding of IF-2 and IF-3 on the 30S subunit to which N-formylmethionyl-tRNA(fMet) subsequently binds. Helps modulate mRNA selection, yielding the 30S pre-initiation complex (PIC). Upon addition of the 50S ribosomal subunit IF-1, IF-2 and IF-3 are released leaving the mature 70S translation initiation complex. This Shewanella pealeana (strain ATCC 700345 / ANG-SQ1) protein is Translation initiation factor IF-1.